Here is a 90-residue protein sequence, read N- to C-terminus: [Phe8]-phyllolitorin (90 aa).

The first 30 residues, 1-30 (MSAVPFTRVLLISGFLAHLLLSTFVTLTVC), serve as a signal peptide directing secretion. Positions 31 to 48 (KEVTEESDDLSKRNVLQR) are excised as a propeptide. Position 49 is a pyrrolidone carboxylic acid (Gln49). At Met57 the chain carries Methionine amide. A propeptide spanning residues 61–90 (SLENTNRRSDEDMEISALFRGSPLKVKRSD) is cleaved from the precursor.

It belongs to the bombesin/neuromedin-B/ranatensin family. In terms of tissue distribution, expressed by the skin glands.

It localises to the secreted. This is [Phe8]-phyllolitorin from Phyllomedusa sauvagei (Sauvage's leaf frog).